Reading from the N-terminus, the 912-residue chain is Androgen receptor (912 aa).

Positions 1–550 (MEVQLGLGRV…PIDYYFPPQK (550 aa)) are modulating. Residues 1-579 (MEVQLGLGRV…GSCKVFFKRA (579 aa)) form an interaction with ZNF318 region. Disordered stretches follow at residues 35-156 (QNPG…GPTF) and 204-236 (QQQQ…YLGG). At serine 69 the chain carries Phosphoserine; by CDK9. At serine 82 the chain carries Phosphoserine. Over residues 204 to 213 (QQQQEVVSEG) the composition is skewed to low complexity. Residues 226–236 (PTSSKDSYLGG) are compositionally biased toward polar residues. Tyrosine 233 is modified (phosphotyrosine; by CSK). Serine 266 carries the phosphoserine modification. Residue tyrosine 277 is modified to Phosphotyrosine; by CSK and TNK2. Phosphotyrosine; by CSK occurs at positions 315, 354, 365, and 370. Tyrosine 371 is subject to Phosphotyrosine; by CSK and TNK2. The tract at residues 375–394 (LSLAGPPPPPPSPHPHARIK) is disordered. Residues 379–388 (GPPPPPPSPH) are compositionally biased toward pro residues. A Glycyl lysine isopeptide (Lys-Gly) (interchain with G-Cter in SUMO) cross-link involves residue lysine 394. Tyrosine 401 is modified (phosphotyrosine; by CSK). The tract at residues 452–490 (LYGPCGGSGGGGTGESVSVTPYGYTRPQQGLTGQEGDFP) is disordered. The span at 455 to 465 (PCGGSGGGGTG) shows a compositional bias: gly residues. Lysine 513 is covalently cross-linked (Glycyl lysine isopeptide (Lys-Gly) (interchain with G-Cter in SUMO)). 2 positions are modified to phosphotyrosine; by CSK: tyrosine 527 and tyrosine 544. The segment at 544 to 911 (YYFPPQKTCL…GKVKPIYFHT (368 aa)) is interaction with LPXN. Positions 551–624 (TCLICGDEAS…AGMTLGARRL (74 aa)) form a DNA-binding region, nuclear receptor. 2 NR C4-type zinc fingers span residues 552-572 (CLIC…CGSC) and 588-612 (CASR…LRKC). The interval 564-654 (YGALTCGSCK…TEETTQKLTV (91 aa)) is interaction with HIPK3. The interaction with CCAR1 stretch occupies residues 584-911 (QKYLCASRND…GKVKPIYFHT (328 aa)). The segment at 617-911 (MTLGARRLKK…GKVKPIYFHT (295 aa)) is interaction with KAT7. Serine 643 carries the post-translational modification Phosphoserine; by STK4/MST1. One can recognise an NR LBD domain in the interval 661-892 (ECQPIFLNVL…DFPEMMAEII (232 aa)). 17beta-hydroxy-5alpha-androstan-3-one-binding residues include asparagine 698 and arginine 745. Residues lysine 838 and lysine 840 each participate in a glycyl lysine isopeptide (Lys-Gly) (interchain with G-Cter in ubiquitin) cross-link. Threonine 870 contributes to the 17beta-hydroxy-5alpha-androstan-3-one binding site. Tyrosine 908 carries the post-translational modification Phosphotyrosine; by CSK.

The protein belongs to the nuclear hormone receptor family. NR3 subfamily. In terms of assembly, binds DNA as a homodimer. Part of a ternary complex containing AR, EFCAB6/DJBP and PARK7. Interacts with HIPK3 and NR0B2 in the presence of androgen. The ligand binding domain interacts with KAT7/HBO1 in the presence of dihydrotestosterone. Interacts with EFCAB6/DJBP, PQBP1, RANBP9, RBAK, SPDEF, SRA1, TGFB1I1 and RREB1. Interacts with ZMIZ1/ZIMP10 and ZMIZ2/ZMIP7 which both enhance its transactivation activity. Interacts with SLC30A9 and RAD54L2/ARIP4. Interacts with MACROD1 (via macro domain). Interacts via the ligand-binding domain with LXXLL and FXXLF motifs from NCOA1, NCOA2, NCOA3 and MAGEA11. Interacts (via nuclear receptor DNA binding domain and nuclear receptor ligand binding domain) with NCOA4. The AR N-terminal poly-Gln region binds Ran resulting in enhancement of AR-mediated transactivation. Ran-binding decreases as the poly-Gln length increases. Interacts with HIP1 (via coiled coil domain). Interacts (via ligand-binding domain) with TRIM68. Interacts with TNK2. Interacts with USP26. Interacts with RNF6. Interacts (regulated by RNF6 probably through polyubiquitination) with RNF14; regulates AR transcriptional activity. Interacts with PRMT2 and TRIM24. Interacts with RACK1. Interacts with RANBP10; this interaction enhances dihydrotestosterone-induced AR transcriptional activity. Interacts with PRPF6 in a hormone-independent way; this interaction enhances dihydrotestosterone-induced AR transcriptional activity. Interacts with STK4/MST1. Interacts with ZIPK/DAPK3. Interacts with LPXN. Interacts with MAK. Part of a complex containing AR, MAK and NCOA3. Interacts with CRY1. Interacts with CCAR1 and GATA2. Interacts with ZNF318. Interacts with BUD31. Interacts with ARID4A. Interacts with ARID4B. Interacts (via NR LBD domain) with ZBTB7A; the interaction is direct and androgen-dependent. Interacts with NCOR1. Interacts with NCOR2. Interacts with CRY2 in a ligand-dependent manner. Phosphorylation by TNK2 enhances the DNA-binding and transcriptional activity. Phosphorylation at Ser-69 by CDK9 regulates AR promoter selectivity and cell growth. Post-translationally, sumoylated on Lys-394 (major) and Lys-513. Ubiquitinated. Deubiquitinated by USP26. 'Lys-6' and 'Lys-27'-linked polyubiquitination by RNF6 modulates AR transcriptional activity and specificity. In terms of processing, palmitoylated by ZDHHC7 and ZDHHC21. Palmitoylation is required for plasma membrane targeting and for rapid intracellular signaling via ERK and AKT kinases and cAMP generation.

The protein resides in the nucleus. Its subcellular location is the cytoplasm. Functionally, steroid hormone receptors are ligand-activated transcription factors that regulate eukaryotic gene expression and affect cellular proliferation and differentiation in target tissues. Transcription factor activity is modulated by bound coactivator and corepressor proteins like ZBTB7A that recruits NCOR1 and NCOR2 to the androgen response elements/ARE on target genes, negatively regulating androgen receptor signaling and androgen-induced cell proliferation. Transcription activation is also down-regulated by NR0B2. Activated, but not phosphorylated, by HIPK3 and ZIPK/DAPK3. This Crocuta crocuta (Spotted hyena) protein is Androgen receptor (AR).